The primary structure comprises 634 residues: RING finger protein 207 (634 aa).

The RING-type zinc finger occupies 25–64 (CPLCHVQYERPCLLDCFHDFCAGCLRGRATDGRLTCPLCQ). The B box-type; atypical zinc-finger motif lies at 93–145 (VEAVRCANCDLECSEQDVETTYFCNTCGQPLCARCRDETHRARMFARHDIVAL). The Zn(2+) site is built by Cys98, Cys101, Cys127, and His132. 2 coiled-coil regions span residues 422-457 (EHCR…KHHS) and 494-518 (EIWE…HDLL). Residues 552–634 (FQAPVDEQSE…DVPTWREHPT (83 aa)) are disordered.

Interacts with the core-glycosylated, but not the fully glycosylated form of KCNH2/HERG. Interacts with DNAJA1 and HSPA8. Interacts (via the C-terminus) with HSPA1A; this interaction additively increases KCNH2 expression.

The protein resides in the cytoplasm. Functionally, plays a role in cardiac repolarization possibly by stabilizing membrane expression of the potassium channel KCNH2/HERG, or by assisting its synthesis, folding or export from the endoplasmic reticulum, in a heat shock protein-dependent manner. This Homo sapiens (Human) protein is RING finger protein 207 (RNF207).